The sequence spans 22 residues: Chitin-binding protein 3 (22 aa).

Glycosylated; contains 2.5% carbohydrates.

Functionally, chitin-binding protein. Has antifungal activity against F.solani, F.oxysporum, C.musae and C.gloesporoides but not against P.oligandrum. Depending on concentration the antifungal activity can be fungistatic or fungicidal. Inhibits both spore germination and mycelial growth in F.solani at a concentration of 0.1 mg/ml. Has antifungal activity against C.krusei, C.albicans, C.tropicalis and C.parapsilosis. Has no chitinase, beta-glucanase or hemagglutinating activity. Acts as a flocculent. The protein is Chitin-binding protein 3 of Moringa oleifera (Horseradish tree).